A 136-amino-acid chain; its full sequence is Small ribosomal subunit protein uS9 (136 aa).

Residues 95 to 136 (GLSPDNRKPLKTEGHLSRDPRSKERKKYGLKKARKAGQFSKR) form a disordered region. The span at 99–116 (DNRKPLKTEGHLSRDPRS) shows a compositional bias: basic and acidic residues. Residues 117–136 (KERKKYGLKKARKAGQFSKR) show a composition bias toward basic residues.

Belongs to the universal ribosomal protein uS9 family.

The protein is Small ribosomal subunit protein uS9 of Prochlorococcus marinus subsp. pastoris (strain CCMP1986 / NIES-2087 / MED4).